Reading from the N-terminus, the 61-residue chain is MDSRLLEIIACPRCQGRLQLDKENERLICRFEHIAFPIVQGIPVLLVEEAVSLAEDPKDIT.

This sequence belongs to the UPF0434 family.

This chain is UPF0434 protein MS0934, found in Mannheimia succiniciproducens (strain KCTC 0769BP / MBEL55E).